Consider the following 110-residue polypeptide: ATP synthase epsilon chain (110 aa).

It belongs to the ATPase epsilon chain family. F-type ATPases have 2 components, CF(1) - the catalytic core - and CF(0) - the membrane proton channel. CF(1) has five subunits: alpha(3), beta(3), gamma(1), delta(1), epsilon(1). CF(0) has three main subunits: a, b and c.

The protein resides in the cell inner membrane. In terms of biological role, produces ATP from ADP in the presence of a proton gradient across the membrane. This is ATP synthase epsilon chain from Rickettsia typhi (strain ATCC VR-144 / Wilmington).